We begin with the raw amino-acid sequence, 407 residues long: MTETTPKTAPWTVQKRTAVLVLADGTVIEGKGLGATGAVEAEVVFNTALTGYEEILTDPSYAGQIVTFTFPHIGNVGANAEDIEDLTPANRHGAVGAIFKADITAPSNFRAAEDLDSWLKHRGIIALAGIDTRALTALIRERGAQNAVIAHDPNGNFDLDALKARAANWCGLENLDLAKDVTIGQSLVWKELPWTLQDGYGEQDAPQYHVVALDFGVKRNILRLLTGLGAKVTVLPATATAEDVLAHNPDGVFLSNGPGDPAATGEYAVPTIGKLVETGIPLFGICLGHQMLALALGGRTEKMHQGHHGANHPVKDYTTGKVEIVSMNHGFAVDSDSLPENVEETHVSLFDGTNCGLRVVGKPVFSVQHHPEASPGPQDSHYLFRRFINLIRERKGQAPLPESEQAA.

The interval 1–205 (MTETTPKTAP…LQDGYGEQDA (205 aa)) is CPSase. 3 residues coordinate L-glutamine: S60, G257, and G259. The Glutamine amidotransferase type-1 domain occupies 209–397 (HVVALDFGVK…INLIRERKGQ (189 aa)). C286 functions as the Nucleophile in the catalytic mechanism. Residues L287, Q290, N328, G330, and F331 each contribute to the L-glutamine site. Catalysis depends on residues H370 and E372.

This sequence belongs to the CarA family. In terms of assembly, composed of two chains; the small (or glutamine) chain promotes the hydrolysis of glutamine to ammonia, which is used by the large (or ammonia) chain to synthesize carbamoyl phosphate. Tetramer of heterodimers (alpha,beta)4.

The enzyme catalyses hydrogencarbonate + L-glutamine + 2 ATP + H2O = carbamoyl phosphate + L-glutamate + 2 ADP + phosphate + 2 H(+). It carries out the reaction L-glutamine + H2O = L-glutamate + NH4(+). It functions in the pathway amino-acid biosynthesis; L-arginine biosynthesis; carbamoyl phosphate from bicarbonate: step 1/1. It participates in pyrimidine metabolism; UMP biosynthesis via de novo pathway; (S)-dihydroorotate from bicarbonate: step 1/3. Its function is as follows. Small subunit of the glutamine-dependent carbamoyl phosphate synthetase (CPSase). CPSase catalyzes the formation of carbamoyl phosphate from the ammonia moiety of glutamine, carbonate, and phosphate donated by ATP, constituting the first step of 2 biosynthetic pathways, one leading to arginine and/or urea and the other to pyrimidine nucleotides. The small subunit (glutamine amidotransferase) binds and cleaves glutamine to supply the large subunit with the substrate ammonia. The protein is Carbamoyl phosphate synthase small chain of Brucella suis (strain ATCC 23445 / NCTC 10510).